Consider the following 52-residue polypeptide: Conotoxin Cal6.36 (52 aa).

The N-terminal stretch at Met1 to Ala22 is a signal peptide. 3 disulfides stabilise this stretch: Cys24/Cys39, Cys31/Cys43, and Cys38/Cys47.

In terms of tissue distribution, expressed by the venom duct.

It is found in the secreted. In terms of biological role, probable neurotoxin. This is Conotoxin Cal6.36 from Californiconus californicus (California cone).